We begin with the raw amino-acid sequence, 128 residues long: Holo-[acyl-carrier-protein] synthase (128 aa).

Residues D8 and E60 each coordinate Mg(2+).

This sequence belongs to the P-Pant transferase superfamily. AcpS family. Requires Mg(2+) as cofactor.

It is found in the cytoplasm. It carries out the reaction apo-[ACP] + CoA = holo-[ACP] + adenosine 3',5'-bisphosphate + H(+). Functionally, transfers the 4'-phosphopantetheine moiety from coenzyme A to a Ser of acyl-carrier-protein. This is Holo-[acyl-carrier-protein] synthase from Anaeromyxobacter dehalogenans (strain 2CP-C).